The chain runs to 165 residues: Putative protein FAM86C2P (165 aa).

It belongs to the class I-like SAM-binding methyltransferase superfamily. EEF2KMT family.

The chain is Putative protein FAM86C2P (FAM86C2P) from Homo sapiens (Human).